The chain runs to 299 residues: Single myb histone 1 (299 aa).

In terms of domain architecture, HTH myb-type spans 1 to 61; that stretch reads MGAPKQRWTP…KWRNLSVTAG (61 aa). The segment at residues 28–57 is a DNA-binding region (H-T-H motif); the sequence is WRTILRDSDFSALLRLRSNVDLKDKWRNLS. The H15 domain maps to 124 to 192; that stretch reads SVARLDDLIL…KVNQKYRIAP (69 aa). Residues 238–279 adopt a coiled-coil conformation; that stretch reads EEAAAFAAKAVAEAEVAIAEAEEAARVAEAAENDAEAAKAFL.

This sequence belongs to the histone H1/H5 family. SMH subfamily. Forms a homodimer and heterodimers. As to expression, expressed in leaves.

It is found in the nucleus. Its subcellular location is the chromosome. It localises to the nucleolus. The protein resides in the telomere. In terms of biological role, binds preferentially double-stranded telomeric repeats 5'-TTTAGGG-3', but can also bind to the single G-rich and C-rich telomeric strand. In Zea mays (Maize), this protein is Single myb histone 1 (SMH1).